We begin with the raw amino-acid sequence, 308 residues long: Flavonol synthase 3 (308 aa).

In terms of domain architecture, Fe2OG dioxygenase spans 167–267; it reads TIEYLMKINY…RISWPVFVES (101 aa). Position 175–177 (175–177) interacts with 2-oxoglutarate; that stretch reads NYY. 3 residues coordinate Fe cation: H192, D194, and H248. Residue 258–260 participates in 2-oxoglutarate binding; the sequence is RIS.

Belongs to the iron/ascorbate-dependent oxidoreductase family. Requires Fe(2+) as cofactor. Widely expressed at low levels.

It catalyses the reaction a (2R,3R)-dihydroflavonol + 2-oxoglutarate + O2 = a flavonol + succinate + CO2 + H2O. It participates in secondary metabolite biosynthesis; flavonoid biosynthesis. Catalyzes the formation of flavonols from dihydroflavonols. Possesses low activity in vitro towards dihydrokaempferol and dihydroquercetin producing kaempferol and quercitin, respectively. The polypeptide is Flavonol synthase 3 (Arabidopsis thaliana (Mouse-ear cress)).